A 1485-amino-acid polypeptide reads, in one-letter code: Chromosome partition protein MukB (1485 aa).

ATP is bound at residue 34-41; that stretch reads GGNGAGKS. Coiled coils occupy residues 311 to 480 and 519 to 665; these read EMAR…EAYR and GARL…RLSQ. The interval 666 to 783 is flexible hinge; that stretch reads PGGAEDARLI…SLPLFGRAAR (118 aa). Coiled coils occupy residues 832 to 1115 and 1209 to 1265; these read NDPE…QAKA and IDAI…LQSV.

This sequence belongs to the SMC family. MukB subfamily. In terms of assembly, homodimerization via its hinge domain. Binds to DNA via its C-terminal region. Interacts, and probably forms a ternary complex, with MukE and MukF via its C-terminal region. The complex formation is stimulated by calcium or magnesium. Interacts with tubulin-related protein FtsZ.

It localises to the cytoplasm. The protein resides in the nucleoid. Its function is as follows. Plays a central role in chromosome condensation, segregation and cell cycle progression. Functions as a homodimer, which is essential for chromosome partition. Involved in negative DNA supercoiling in vivo, and by this means organize and compact chromosomes. May achieve or facilitate chromosome segregation by condensation DNA from both sides of a centrally located replisome during cell division. This is Chromosome partition protein MukB from Edwardsiella ictaluri (strain 93-146).